The chain runs to 355 residues: S-adenosylmethionine:tRNA ribosyltransferase-isomerase (355 aa).

Belongs to the QueA family. As to quaternary structure, monomer.

Its subcellular location is the cytoplasm. The enzyme catalyses 7-aminomethyl-7-carbaguanosine(34) in tRNA + S-adenosyl-L-methionine = epoxyqueuosine(34) in tRNA + adenine + L-methionine + 2 H(+). It functions in the pathway tRNA modification; tRNA-queuosine biosynthesis. Its function is as follows. Transfers and isomerizes the ribose moiety from AdoMet to the 7-aminomethyl group of 7-deazaguanine (preQ1-tRNA) to give epoxyqueuosine (oQ-tRNA). The protein is S-adenosylmethionine:tRNA ribosyltransferase-isomerase of Aeromonas hydrophila subsp. hydrophila (strain ATCC 7966 / DSM 30187 / BCRC 13018 / CCUG 14551 / JCM 1027 / KCTC 2358 / NCIMB 9240 / NCTC 8049).